Reading from the N-terminus, the 854-residue chain is Probable disease resistance protein At1g51480 (854 aa).

A coiled-coil region spans residues 25 to 62 (RNYIHKMEANLDDLHTTMEELKNGRDDLLRRVSIEEDK). Positions 138 to 441 (AHKIPVPKVE…CEGYINPNRY (304 aa)) constitute an NB-ARC domain. Position 180–187 (180–187 (GMGGVGKT)) interacts with ATP. 6 LRR repeats span residues 514–535 (IVRQ…SKCS), 536–557 (NLST…FFLF), 560–582 (KLVV…ISNL), 584–605 (SLQY…MKKL), 607–629 (KLIY…SATL), and 631–652 (NLQV…MEEL).

Belongs to the disease resistance NB-LRR family.

Its function is as follows. Probable disease resistance protein. The protein is Probable disease resistance protein At1g51480 of Arabidopsis thaliana (Mouse-ear cress).